The chain runs to 1706 residues: Bifunctional hemolysin/adenylate cyclase (1706 aa).

Residues 1 to 399 (MQQSHQAGYA…RRPSLGAVER (399 aa)) are a, catalytic. 349–356 (AYGVAGKS) is a binding site for ATP. Positions 367-405 (GVPGGRSKSSPDVLETVPASPGLRRPSLGAVERQDSGYD) are disordered. A b, Ala/Gly-rich region spans residues 400–912 (QDSGYDSLDG…LKHSIKLEVI (513 aa)). A required for interaction with CyaC region spans residues 500–698 (LSAAVFGLGE…SVVGAPVAVV (199 aa)). Residues lysine 860 and lysine 983 are each lipidated (N6-palmitoyl lysine). The interval 913-1656 (GGDGDDVVLA…RDADHRVEAI (744 aa)) is c. 17 Hemolysin-type calcium-binding repeats span residues 1014–1031 (IGGA…DNFL), 1032–1049 (AGGA…NDTL), 1050–1067 (VGGE…DDVF), 1155–1172 (WGDD…DDIL), 1173–1190 (RGGL…NDIF), 1279–1296 (MGQG…DDLL), 1297–1314 (FGGD…NDTL), 1315–1332 (YGGL…NDWF), 1335–1352 (TPAR…VDTV), 1411–1428 (TGDA…ADVL), 1429–1446 (AGGE…DDQL), 1447–1464 (SGDA…DDWF), 1468–1484 (AANA…NDTV), 1537–1554 (IGDA…NDVL), 1555–1572 (SGGA…SDLL), 1573–1590 (SGDA…DDTY), and 1603–1620 (ESGG…ADQL). A d, Asp/Gly-rich region spans residues 1657-1706 (HAANQAIDPAGIEKLVEAMAQYPDPGAAAAAPPAARVPDTLMQSLAVNWR).

This sequence in the N-terminal section; belongs to the adenylyl cyclase class-2 family. In the C-terminal section; belongs to the RTX prokaryotic toxin family. Released in a processed form. In terms of processing, palmitoylated at Lys-860 and Lys-983 by CyaC. The toxin only becomes active when modified in position Lys-983: palmitoylation is required for efficient membrane insertion and pore formation of the acylated Hemolysin chain.

It is found in the secreted. It localises to the host cell membrane. The catalysed reaction is ATP = 3',5'-cyclic AMP + diphosphate. Activated by host calmodulin. Bifunctional adenylate cyclase toxin-hemolysin that plays a crucial role in host colonization. It causes whooping cough by acting on mammalian cells by elevating cAMP-concentration and thus disrupts normal cell function. Its function is as follows. Adenylate cyclase that is activated by host intracellular calmodulin and catalyzes un-regulated conversion of ATP to cAMP, thereby impairing microbicidal functions of immune effector cells and inducing apoptosis of lung macrophages. Functionally, hemolysin that forms small cation-selective membrane channels, leading to hemolytic activity. The hemolytic activity of CyaA is weak compared with that of the HlyA of E.coli. This is Bifunctional hemolysin/adenylate cyclase (cya) from Bordetella bronchiseptica (strain ATCC BAA-588 / NCTC 13252 / RB50) (Alcaligenes bronchisepticus).